Consider the following 441-residue polypeptide: Xaa-Pro dipeptidase (441 aa).

Mn(2+)-binding residues include aspartate 244, aspartate 255, histidine 336, glutamate 381, and glutamate 420.

It belongs to the peptidase M24B family. Bacterial-type prolidase subfamily. Mn(2+) is required as a cofactor.

The enzyme catalyses Xaa-L-Pro dipeptide + H2O = an L-alpha-amino acid + L-proline. Splits dipeptides with a prolyl residue in the C-terminal position. The polypeptide is Xaa-Pro dipeptidase (Xanthomonas campestris pv. campestris (strain B100)).